The primary structure comprises 260 residues: Small ribosomal subunit protein uS2 (260 aa).

The tract at residues 240-260 (VLKPKLPYQPNRRPYQETVKK) is disordered.

It belongs to the universal ribosomal protein uS2 family.

In Phytoplasma australiense, this protein is Small ribosomal subunit protein uS2.